A 57-amino-acid chain; its full sequence is MPAIQPPLYPTFLLLILLSLIVTLYVWIISTITYKTVVRHAALYQRSFFRWSFDHSL.

The Virion surface portion of the chain corresponds to 1–8 (MPAIQPPL). A helical membrane pass occupies residues 9-29 (YPTFLLLILLSLIVTLYVWII). Residues 30-57 (STITYKTVVRHAALYQRSFFRWSFDHSL) lie on the Intravirion side of the membrane.

It belongs to the rubulavirus small hydrophobic protein family. Interacts with host TNFRSF1A, RIPK1 and IRAK1; these interactions interfere with host NF-kappa-B activation at the level of receptor complexes. Interacts with host protein UBQLN4.

The protein localises to the virion membrane. It is found in the host cell membrane. In terms of biological role, plays a role in the inhibition of the host NF-kappa-B pathway. This inhibition occurs at the receptor level, by preventing the signaling of TNFR1 as well as IL-1R and TLR3. This chain is Small hydrophobic protein (SH), found in Mumps virus genotype B (strain Urabe vaccine AM9) (MuV).